We begin with the raw amino-acid sequence, 802 residues long: Aldehyde dehydrogenase family 16 member A1 (802 aa).

This sequence belongs to the aldehyde dehydrogenase family. As to quaternary structure, interacts with SPG21.

This is Aldehyde dehydrogenase family 16 member A1 (Aldh16a1) from Mus musculus (Mouse).